A 667-amino-acid chain; its full sequence is UvrABC system protein B (667 aa).

Residues 25-414 enclose the Helicase ATP-binding domain; the sequence is TGLQRGDKHQ…GVVVEQIIRP (390 aa). ATP is bound at residue 38–45; that stretch reads GVTGSGKT. A Beta-hairpin motif is present at residues 91-114; sequence YYDYYQPEAYVPTTDTFIEKDSSI. One can recognise a Helicase C-terminal domain in the interval 430 to 596; it reads QVDDLIHEIR…TVKKSLRSIL (167 aa). Residues 624–659 enclose the UVR domain; sequence KNEIARVKEEMLAAAANLEFEKAAELRDRMLELDKL.

It belongs to the UvrB family. In terms of assembly, forms a heterotetramer with UvrA during the search for lesions. Interacts with UvrC in an incision complex.

Its subcellular location is the cytoplasm. The UvrABC repair system catalyzes the recognition and processing of DNA lesions. A damage recognition complex composed of 2 UvrA and 2 UvrB subunits scans DNA for abnormalities. Upon binding of the UvrA(2)B(2) complex to a putative damaged site, the DNA wraps around one UvrB monomer. DNA wrap is dependent on ATP binding by UvrB and probably causes local melting of the DNA helix, facilitating insertion of UvrB beta-hairpin between the DNA strands. Then UvrB probes one DNA strand for the presence of a lesion. If a lesion is found the UvrA subunits dissociate and the UvrB-DNA preincision complex is formed. This complex is subsequently bound by UvrC and the second UvrB is released. If no lesion is found, the DNA wraps around the other UvrB subunit that will check the other stand for damage. This Syntrophotalea carbinolica (strain DSM 2380 / NBRC 103641 / GraBd1) (Pelobacter carbinolicus) protein is UvrABC system protein B.